Consider the following 272-residue polypeptide: Auxin-responsive protein IAA5 (272 aa).

Residues 1-92 form a disordered region; sequence MSPPLEPHDY…DSSPRHGASS (92 aa). 2 stretches are compositionally biased toward low complexity: residues 14–33 and 40–50; these read SAAAASPTPSSSSCSSSPNP and PRLTLRLGLPG. The EAR-like (transcriptional repression) signature appears at 44–48; the sequence is LRLGL. The PB1 domain occupies 152–256; it reads PLYVKVSMDG…RKLKIMRGSD (105 aa).

It belongs to the Aux/IAA family. In terms of assembly, homodimers and heterodimers. As to expression, highly expressed in roots and flowers. Expressed in shoots.

Its subcellular location is the nucleus. Aux/IAA proteins are short-lived transcriptional factors that function as repressors of early auxin response genes at low auxin concentrations. This chain is Auxin-responsive protein IAA5 (IAA5), found in Oryza sativa subsp. indica (Rice).